We begin with the raw amino-acid sequence, 559 residues long: NXPE family member 3 (559 aa).

The first 30 residues, 1–30, serve as a signal peptide directing secretion; that stretch reads MWINFVKLRLFCCLLAVLMVVVLVVNVTQV. Asn26, Asn237, and Asn346 each carry an N-linked (GlcNAc...) asparagine glycan.

It belongs to the NXPE family.

The protein localises to the secreted. In Bos taurus (Bovine), this protein is NXPE family member 3 (NXPE3).